Consider the following 228-residue polypeptide: Probable septum site-determining protein MinC (228 aa).

The protein belongs to the MinC family. As to quaternary structure, interacts with MinD and FtsZ.

Its function is as follows. Cell division inhibitor that blocks the formation of polar Z ring septums. Rapidly oscillates between the poles of the cell to destabilize FtsZ filaments that have formed before they mature into polar Z rings. Prevents FtsZ polymerization. This chain is Probable septum site-determining protein MinC, found in Yersinia enterocolitica serotype O:8 / biotype 1B (strain NCTC 13174 / 8081).